We begin with the raw amino-acid sequence, 446 residues long: Phosphoglucosamine mutase (446 aa).

S102 serves as the catalytic Phosphoserine intermediate. 4 residues coordinate Mg(2+): S102, D241, D243, and D245. A Phosphoserine modification is found at S102.

It belongs to the phosphohexose mutase family. Mg(2+) serves as cofactor. In terms of processing, activated by phosphorylation.

The catalysed reaction is alpha-D-glucosamine 1-phosphate = D-glucosamine 6-phosphate. Catalyzes the conversion of glucosamine-6-phosphate to glucosamine-1-phosphate. This chain is Phosphoglucosamine mutase, found in Xylella fastidiosa (strain M23).